Consider the following 253-residue polypeptide: UPF0246 protein LBA1843 (253 aa).

This sequence belongs to the UPF0246 family.

The chain is UPF0246 protein LBA1843 from Lactobacillus acidophilus (strain ATCC 700396 / NCK56 / N2 / NCFM).